We begin with the raw amino-acid sequence, 1218 residues long: Structural maintenance of chromosomes protein 2 (1218 aa).

Residue 32–39 (GLNGSGKS) coordinates ATP. A coiled-coil region spans residues 209–517 (VKLKKEKEEY…INSVKIDYKI (309 aa)). The SMC hinge domain occupies 525–654 (DVLGQIYKLI…CSNVDLCKKI (130 aa)). 2 coiled-coil regions span residues 693-949 (LNYE…DTVK) and 978-1045 (RHDV…KKSE).

This sequence belongs to the SMC family. SMC2 subfamily.

It localises to the nucleus. Its function is as follows. May play a role in the conversion of interphase chromatin into condensed chromosomes. The chain is Structural maintenance of chromosomes protein 2 from Plasmodium falciparum (isolate 3D7).